Consider the following 971-residue polypeptide: DNA-directed RNA polymerase subunit Rpo1N (971 aa).

Methionine 1 is subject to Blocked amino end (Met). Zn(2+) is bound by residues cysteine 62, cysteine 65, cysteine 72, histidine 75, cysteine 102, cysteine 105, cysteine 149, and cysteine 152. Residues 185–204 (SMQPDEDEDDAGVSPQELAE) are disordered. Residues aspartate 527, aspartate 529, and aspartate 531 each coordinate Mg(2+). The interval 951–971 (VEEPPTNLSEHGAAWEVESDD) is disordered.

Belongs to the RNA polymerase beta' chain family. Part of the RNA polymerase complex. It depends on Mg(2+) as a cofactor. The cofactor is Zn(2+). The N-terminus is blocked.

It is found in the cytoplasm. It catalyses the reaction RNA(n) + a ribonucleoside 5'-triphosphate = RNA(n+1) + diphosphate. DNA-dependent RNA polymerase (RNAP) catalyzes the transcription of DNA into RNA using the four ribonucleoside triphosphates as substrates. Forms the clamp head domain. The sequence is that of DNA-directed RNA polymerase subunit Rpo1N from Halobacterium salinarum (strain ATCC 29341 / DSM 671 / R1).